The chain runs to 549 residues: NAC domain-containing protein 53 (549 aa).

In terms of domain architecture, NAC spans 9 to 159; sequence LAPGFRFHPT…AFVLCRIFQK (151 aa). Residues 108-165 mediate DNA binding; sequence VGMKKTLVYHKGRAPRGERTNWVMHEYRLVDQDLDKTGVHQDAFVLCRIFQKSGSGPK. Residues 395-416 show a composition bias toward basic and acidic residues; the sequence is LEKEETSRSKHVVEEKEKDEAS. The disordered stretch occupies residues 395-418; it reads LEKEETSRSKHVVEEKEKDEASCS. The chain crosses the membrane as a helical span at residues 526 to 546; it reads LIFMCFWVLLLSVSFKVSILV.

In terms of tissue distribution, expressed in roots, rosette leaves, cauline leaves, shoot apex and stems.

The protein localises to the endoplasmic reticulum membrane. It localises to the nucleus. Transcriptional activator activated by proteolytic cleavage through regulated intramembrane proteolysis (RIP). Promotes reactive oxygen species (ROS) production during drought-induced leaf senescence. In response to abscisic acid (ABA)-mediated drought stress signals, binds directly to the promoters of RBOHC and RBOHE genes, encoding ROS biosynthetic enzymes, resulting in ROS accumulation and triggering leaf senescence via programmed cell death (PCD). ROS-induced leaf senescence sustains plant survival under drought conditions. Involved in heat stress response. Modulates PCD through a ROS-mediated positive feedback control under heat stress conditions. This may provide an adaptation strategy for plant survival under extreme heat stress conditions. Acts as a repressor in preventing anther dehiscence during stamen development by suppressing genes that participate in jasmonic acid (JA) biosynthesis, such as DAD1, AOS, AOC3, OPR3 and 4CLL5/OPCL1. This Arabidopsis thaliana (Mouse-ear cress) protein is NAC domain-containing protein 53.